Here is a 47-residue protein sequence, read N- to C-terminus: Protein YpaB (47 aa).

The sequence is that of Protein YpaB (ypaB) from Escherichia coli (strain K12).